The primary structure comprises 374 residues: MGKKLKYIIDLKFIEEIPEEERRELEKVTEKFAFRTNTYYNSLINWDNPNDPIRRIVIPTTEELEVWGKLDASNESKYMKVHGLEHKYPDTALLLVTDVCGIYCRFCFRKRLFMNDNDEVARDVSEGLEYIRNHPEINNVLLTGGDPLILATFKLEKILKALAEIPHVRIVRIGSKMLAVNPFRVLDDPKLLELFEWFNTETGKKLYLMNHFNHPRELTKEARKAVELVQKTGTTLTNQTPILKGINDDFETLKTLLEELSFIGVPPYYVFQCRPTAGNKAYSTPIEETIDLVEAVRAEVSGLAARVRYVMSHETGKIEILGKTDEHIFFRYHRAADPENRGKFMVFKRNPEAHWFDDYTELVAEYKSSLSGVS.

The 229-residue stretch at 86 to 314 (HKYPDTALLL…ARVRYVMSHE (229 aa)) folds into the Radical SAM core domain. [4Fe-4S] cluster is bound by residues cysteine 100, cysteine 104, and cysteine 107. Lysine 317 carries the N6-(pyridoxal phosphate)lysine modification.

Belongs to the radical SAM superfamily. KamA family. The cofactor is [4Fe-4S] cluster. Pyridoxal 5'-phosphate is required as a cofactor.

The protein is Putative L-lysine 2,3-aminomutase aq_1632 of Aquifex aeolicus (strain VF5).